We begin with the raw amino-acid sequence, 60 residues long: MATPKQKASRGQTHSRRAKFYSAYKINVVKCPKCGEPKLPHRVCLNCGYYGDKQILEIGE.

This sequence belongs to the bacterial ribosomal protein bL32 family.

In Petrotoga mobilis (strain DSM 10674 / SJ95), this protein is Large ribosomal subunit protein bL32.